The chain runs to 239 residues: 1-(5-phosphoribosyl)-5-[(5-phosphoribosylamino)methylideneamino] imidazole-4-carboxamide isomerase (239 aa).

Catalysis depends on Asp-8, which acts as the Proton acceptor. Catalysis depends on Asp-129, which acts as the Proton donor.

It belongs to the HisA/HisF family.

The protein localises to the cytoplasm. It carries out the reaction 1-(5-phospho-beta-D-ribosyl)-5-[(5-phospho-beta-D-ribosylamino)methylideneamino]imidazole-4-carboxamide = 5-[(5-phospho-1-deoxy-D-ribulos-1-ylimino)methylamino]-1-(5-phospho-beta-D-ribosyl)imidazole-4-carboxamide. Its pathway is amino-acid biosynthesis; L-histidine biosynthesis; L-histidine from 5-phospho-alpha-D-ribose 1-diphosphate: step 4/9. The polypeptide is 1-(5-phosphoribosyl)-5-[(5-phosphoribosylamino)methylideneamino] imidazole-4-carboxamide isomerase (Bacillus cytotoxicus (strain DSM 22905 / CIP 110041 / 391-98 / NVH 391-98)).